The chain runs to 87 residues: Probable Fe(2+)-trafficking protein (87 aa).

It belongs to the Fe(2+)-trafficking protein family. In terms of assembly, monomer.

Its function is as follows. Could be a mediator in iron transactions between iron acquisition and iron-requiring processes, such as synthesis and/or repair of Fe-S clusters in biosynthetic enzymes. The protein is Probable Fe(2+)-trafficking protein of Buchnera aphidicola subsp. Baizongia pistaciae (strain Bp).